The primary structure comprises 390 residues: S-adenosylmethionine synthase (390 aa).

His15 serves as a coordination point for ATP. Asp17 is a binding site for Mg(2+). A K(+)-binding site is contributed by Glu43. The L-methionine site is built by Glu56 and Gln99. Residues 99 to 109 (QSPDINQGVDR) form a flexible loop region. ATP contacts are provided by residues 164 to 166 (DAK), 230 to 231 (RF), Asp239, 245 to 246 (RK), Ala262, and Lys266. Residue Asp239 participates in L-methionine binding. Lys270 lines the L-methionine pocket.

Belongs to the AdoMet synthase family. As to quaternary structure, homotetramer; dimer of dimers. The cofactor is Mg(2+). Requires K(+) as cofactor.

The protein localises to the cytoplasm. The catalysed reaction is L-methionine + ATP + H2O = S-adenosyl-L-methionine + phosphate + diphosphate. Its pathway is amino-acid biosynthesis; S-adenosyl-L-methionine biosynthesis; S-adenosyl-L-methionine from L-methionine: step 1/1. In terms of biological role, catalyzes the formation of S-adenosylmethionine (AdoMet) from methionine and ATP. The overall synthetic reaction is composed of two sequential steps, AdoMet formation and the subsequent tripolyphosphate hydrolysis which occurs prior to release of AdoMet from the enzyme. This chain is S-adenosylmethionine synthase, found in Photorhabdus laumondii subsp. laumondii (strain DSM 15139 / CIP 105565 / TT01) (Photorhabdus luminescens subsp. laumondii).